Here is a 264-residue protein sequence, read N- to C-terminus: Thymidylate synthase (264 aa).

Arginine 21 is a dUMP binding site. Histidine 51 provides a ligand contact to (6R)-5,10-methylene-5,6,7,8-tetrahydrofolate. Position 126-127 (126-127) interacts with dUMP; sequence RR. The Nucleophile role is filled by cysteine 146. DUMP-binding positions include 166-169, asparagine 177, and 207-209; these read RSCD and HLY. Position 169 (aspartate 169) interacts with (6R)-5,10-methylene-5,6,7,8-tetrahydrofolate. Serine 263 contributes to the (6R)-5,10-methylene-5,6,7,8-tetrahydrofolate binding site.

Belongs to the thymidylate synthase family. Bacterial-type ThyA subfamily. Homodimer.

It is found in the cytoplasm. It catalyses the reaction dUMP + (6R)-5,10-methylene-5,6,7,8-tetrahydrofolate = 7,8-dihydrofolate + dTMP. It participates in pyrimidine metabolism; dTTP biosynthesis. Its function is as follows. Catalyzes the reductive methylation of 2'-deoxyuridine-5'-monophosphate (dUMP) to 2'-deoxythymidine-5'-monophosphate (dTMP) while utilizing 5,10-methylenetetrahydrofolate (mTHF) as the methyl donor and reductant in the reaction, yielding dihydrofolate (DHF) as a by-product. This enzymatic reaction provides an intracellular de novo source of dTMP, an essential precursor for DNA biosynthesis. In Buchnera aphidicola subsp. Acyrthosiphon pisum (strain Tuc7), this protein is Thymidylate synthase.